The sequence spans 67 residues: MKTQFTVLLITLVLFQMLSQSEAILSYLWNGIKSIFGKRGLSDLSDLDELFDGEITKADLDLLREIM.

An N-terminal signal peptide occupies residues 1-23 (MKTQFTVLLITLVLFQMLSQSEA). Phe-36 carries the post-translational modification Phenylalanine amide. The propeptide occupies 40–67 (GLSDLSDLDELFDGEITKADLDLLREIM).

The protein belongs to the non-disulfide-bridged peptide (NDBP) superfamily. Short antimicrobial peptide (group 4) family. Expressed by the venom gland.

It localises to the secreted. It is found in the target cell membrane. In terms of biological role, amphipathic peptide with antibacterial activities. Shows antiviral activities against the herpes simplex virus type-1. It potently inhibits the initial infection by provoking the rupture of viral envelop and the dissociation of proteins from the virions (EC(50) is 0.41 uM). It also effectively inhibits viral attachment (EC(50) is 5.73 uM), viral entry (EC(50) is 4.32 uM) and viral proliferation after infection (EC(50) is 8.41 uM). Morever, it enters mammalian tested cells (Vero) and reduces the intracellular infectivity. This chain is Peptide Hp1239, found in Heterometrus petersii (Asian forest scorpion).